Consider the following 287-residue polypeptide: Large ribosomal subunit protein uL2 (287 aa).

Residues 221–287 form a disordered region; that stretch reads RGSVMNPCDH…SKRSRGGRDS (67 aa). The span at 258-287 shows a compositional bias: basic residues; it reads KTRKKNKPSNKLVVRRRRRISKRSRGGRDS.

Belongs to the universal ribosomal protein uL2 family. As to quaternary structure, part of the 50S ribosomal subunit. Forms a bridge to the 30S subunit in the 70S ribosome.

Functionally, one of the primary rRNA binding proteins. Required for association of the 30S and 50S subunits to form the 70S ribosome, for tRNA binding and peptide bond formation. It has been suggested to have peptidyltransferase activity; this is somewhat controversial. Makes several contacts with the 16S rRNA in the 70S ribosome. The protein is Large ribosomal subunit protein uL2 of Prochlorococcus marinus (strain MIT 9215).